A 1350-amino-acid polypeptide reads, in one-letter code: Probable serine/threonine-protein kinase DDB_G0278845 (1350 aa).

Disordered stretches follow at residues 66–109 (RELN…NNIR), 121–159 (ENGLLESPTSPIRTSSTPTTPTSPPFITSPPFITSPKGL), 179–249 (LANN…LNSI), 270–296 (SSINGNTTTTTTNTYSYNDNDNVNEYS), 337–396 (NNYN…RDDL), 431–506 (GSTI…EKKK), 525–596 (NDSN…IPTP), and 612–701 (NNNS…NTNE). The span at 84 to 98 (KYLTSSHSSVVIPQD) shows a compositional bias: polar residues. Low complexity-rich tracts occupy residues 127–140 (SPTSPIRTSSTPTT) and 181–210 (NNNNNNNNSNNSNNNSNSSNSNISCSNNSN). Polar residues predominate over residues 211-222 (KISRLINNSNTT). Low complexity predominate over residues 223-235 (DSNASIRSSNNNN). Acidic residues predominate over residues 236–246 (DDFDNNDDEDL). Composition is skewed to low complexity over residues 270 to 293 (SSINGNTTTTTTNTYSYNDNDNVN) and 337 to 391 (NNYN…GYNN). The span at 431-443 (GSTIFTSTSSDIA) shows a compositional bias: polar residues. Positions 454–482 (NENENENENENENENENDNDSDSENENEN) are enriched in acidic residues. 2 stretches are compositionally biased toward low complexity: residues 483-495 (DNSIGNKSNKSNS) and 525-551 (NDSNNNNNNNNSGNNNSFISNGSPFSP). A compositionally biased stretch (polar residues) spans 565-592 (PKPTLQRQRSNSKNVLYSPNASPSNSCK). 3 stretches are compositionally biased toward low complexity: residues 612–637 (NNNSNNIENQNNNNNNIDNNIDNNID), 645–679 (NNNNNNNNNNNNNNNNNNNNNNNNNNNNNNNNNNN), and 690–701 (KKTPNNKINTNE). A Protein kinase domain is found at 756–1082 (FTLIEKIGEG…VENIKNHIFF (327 aa)). ATP contacts are provided by residues 762–770 (IGEGGFGQV) and Lys-785. Asp-880 (proton acceptor) is an active-site residue. The 121-residue stretch at 1083–1203 (NGVPWGKLHD…PRADDQPLLW (121 aa)) folds into the AGC-kinase C-terminal domain. Disordered regions lie at residues 1129–1159 (SLLPPPLPPPPQTPTQPQQPSLPPQTPNDKM), 1190–1219 (GFTYPRADDQPLLWNNNNNNNNNNNNNNNN), 1232–1285 (NNNN…NKTV), and 1300–1350 (NCNN…KQQQ). Pro residues predominate over residues 1131-1142 (LPPPLPPPPQTP). Composition is skewed to low complexity over residues 1204–1219 (NNNNNNNNNNNNNNNN), 1232–1283 (NNNN…SNNK), and 1300–1313 (NCNNNNNNDENNIN). 2 stretches are compositionally biased toward polar residues: residues 1314 to 1330 (TGNLTPPNSSPFNSGEN) and 1338 to 1350 (PTSPYGSYSKQQQ).

This sequence belongs to the protein kinase superfamily. AGC Ser/Thr protein kinase family.

The enzyme catalyses L-seryl-[protein] + ATP = O-phospho-L-seryl-[protein] + ADP + H(+). It catalyses the reaction L-threonyl-[protein] + ATP = O-phospho-L-threonyl-[protein] + ADP + H(+). In Dictyostelium discoideum (Social amoeba), this protein is Probable serine/threonine-protein kinase DDB_G0278845.